The chain runs to 426 residues: Gamma-glutamyl phosphate reductase (426 aa).

It belongs to the gamma-glutamyl phosphate reductase family.

The protein localises to the cytoplasm. The enzyme catalyses L-glutamate 5-semialdehyde + phosphate + NADP(+) = L-glutamyl 5-phosphate + NADPH + H(+). It participates in amino-acid biosynthesis; L-proline biosynthesis; L-glutamate 5-semialdehyde from L-glutamate: step 2/2. In terms of biological role, catalyzes the NADPH-dependent reduction of L-glutamate 5-phosphate into L-glutamate 5-semialdehyde and phosphate. The product spontaneously undergoes cyclization to form 1-pyrroline-5-carboxylate. The protein is Gamma-glutamyl phosphate reductase of Nitrobacter winogradskyi (strain ATCC 25391 / DSM 10237 / CIP 104748 / NCIMB 11846 / Nb-255).